The following is a 116-amino-acid chain: Putative gamma-glutamylcyclotransferase PH0828 (116 aa).

13–16 (YGTL) is a binding site for substrate. Glu-76 functions as the Proton acceptor in the catalytic mechanism.

It belongs to the gamma-glutamylcyclotransferase family.

Functionally, putative gamma-glutamylcyclotransferase. This is Putative gamma-glutamylcyclotransferase PH0828 from Pyrococcus horikoshii (strain ATCC 700860 / DSM 12428 / JCM 9974 / NBRC 100139 / OT-3).